Reading from the N-terminus, the 1114-residue chain is Extracellular sulfatase SULF-1 homolog (1114 aa).

Positions 1–25 (MMRHSSLRLIIGGLILLLFVLNVFS) are cleaved as a signal peptide. Residues Asp-62, Asp-63, and Cys-98 each coordinate Ca(2+). Cys-98 serves as the catalytic Nucleophile. Position 98 is a 3-oxoalanine (Cys) (Cys-98). N-linked (GlcNAc...) asparagine glycosylation is found at Asn-122, Asn-159, Asn-181, Asn-208, and Asn-251. 2 residues coordinate Ca(2+): Asp-327 and His-328. Residue Asn-447 is glycosylated (N-linked (GlcNAc...) asparagine). A compositionally biased stretch (low complexity) spans 466-479 (SSSSTAATLMSSTA). The segment at 466 to 504 (SSSSTAATLMSSTAQQPEDGEEEVETDNEEDDVDGDGAM) is disordered. Residues 483–502 (EDGEEEVETDNEEDDVDGDG) show a composition bias toward acidic residues. N-linked (GlcNAc...) asparagine glycosylation is found at Asn-683, Asn-713, and Asn-743. The interval 781 to 812 (KQLRESNKQALAAGRRNDNRRRNDQSVLDSGA) is disordered. A compositionally biased stretch (basic and acidic residues) spans 795 to 804 (RRNDNRRRND). N-linked (GlcNAc...) asparagine glycosylation occurs at Asn-817. Positions 876–895 (ADSKEMAREARRKLKEERQR) are enriched in basic and acidic residues. Residues 876 to 901 (ADSKEMAREARRKLKEERQRKKERKR) are disordered. Asn-945, Asn-955, and Asn-974 each carry an N-linked (GlcNAc...) asparagine glycan. The segment at 1073 to 1114 (LSKYNRLTGSQQSHMKRRPWKQTPLQQSPRFLRTHSVTPAQA) is disordered. Residues 1095–1114 (TPLQQSPRFLRTHSVTPAQA) are compositionally biased toward polar residues.

This sequence belongs to the sulfatase family. Ca(2+) is required as a cofactor. In terms of processing, the conversion to 3-oxoalanine (also known as C-formylglycine, FGly), of a serine or cysteine residue in prokaryotes and of a cysteine residue in eukaryotes, is critical for catalytic activity.

The protein resides in the endoplasmic reticulum. The protein localises to the golgi apparatus. Its subcellular location is the golgi stack. It localises to the cell surface. The sequence is that of Extracellular sulfatase SULF-1 homolog (Sulf1) from Drosophila melanogaster (Fruit fly).